A 768-amino-acid chain; its full sequence is U-box domain-containing protein 45 (768 aa).

Residues 278–352 (VPPEELRCPI…SSWCEQNGVQ (75 aa)) form the U-box domain. ARM repeat units follow at residues 454 to 497 (EEAR…NLAV), 500 to 540 (NRNK…CLEE), 542 to 579 (KPVI…HLST), 581 to 620 (PPNI…NLVL), and 623 to 662 (AGKD…ILCN).

As to quaternary structure, binds to SD129.

The catalysed reaction is S-ubiquitinyl-[E2 ubiquitin-conjugating enzyme]-L-cysteine + [acceptor protein]-L-lysine = [E2 ubiquitin-conjugating enzyme]-L-cysteine + N(6)-ubiquitinyl-[acceptor protein]-L-lysine.. The protein operates within protein modification; protein ubiquitination. Its function is as follows. Functions as an E3 ubiquitin ligase. This Arabidopsis thaliana (Mouse-ear cress) protein is U-box domain-containing protein 45 (PUB45).